The primary structure comprises 106 residues: 3-phenylpropionate/cinnamic acid dioxygenase ferredoxin subunit (106 aa).

In terms of domain architecture, Rieske spans 4–99 (IYACPVADVP…VHVEGGDIFI (96 aa)). 4 residues coordinate [2Fe-2S] cluster: cysteine 42, histidine 44, cysteine 62, and histidine 65.

It belongs to the bacterial ring-hydroxylating dioxygenase ferredoxin component family. In terms of assembly, this dioxygenase system consists of four proteins: the two subunits of the hydroxylase component (HcaE and HcaF), a ferredoxin (HcaC) and a ferredoxin reductase (HcaD). The cofactor is [2Fe-2S] cluster.

It functions in the pathway aromatic compound metabolism; 3-phenylpropanoate degradation. Functionally, part of the multicomponent 3-phenylpropionate dioxygenase, that converts 3-phenylpropionic acid (PP) and cinnamic acid (CI) into 3-phenylpropionate-dihydrodiol (PP-dihydrodiol) and cinnamic acid-dihydrodiol (CI-dihydrodiol), respectively. This protein seems to be a 2Fe-2S ferredoxin. The sequence is that of 3-phenylpropionate/cinnamic acid dioxygenase ferredoxin subunit from Escherichia coli O139:H28 (strain E24377A / ETEC).